The primary structure comprises 547 residues: CTP synthase (547 aa).

The interval 1–265 (MARFIFITGG…DQAVLDAFGI (265 aa)) is amidoligase domain. CTP is bound at residue serine 13. Serine 13 contributes to the UTP binding site. Residues 14-19 (SLGKGL) and aspartate 71 contribute to the ATP site. Mg(2+)-binding residues include aspartate 71 and glutamate 139. Residues 146–148 (DIE), 186–191 (KTKPTQ), and lysine 222 each bind CTP. UTP is bound by residues 186–191 (KTKPTQ) and lysine 222. In terms of domain architecture, Glutamine amidotransferase type-1 spans 291 to 546 (KVAIVGKYTQ…VRAAKENSRL (256 aa)). Glycine 353 serves as a coordination point for L-glutamine. Cysteine 380 acts as the Nucleophile; for glutamine hydrolysis in catalysis. L-glutamine is bound by residues 381 to 384 (LGMQ), glutamate 404, and arginine 474. Residues histidine 519 and glutamate 521 contribute to the active site.

This sequence belongs to the CTP synthase family. Homotetramer.

It carries out the reaction UTP + L-glutamine + ATP + H2O = CTP + L-glutamate + ADP + phosphate + 2 H(+). The catalysed reaction is L-glutamine + H2O = L-glutamate + NH4(+). The enzyme catalyses UTP + NH4(+) + ATP = CTP + ADP + phosphate + 2 H(+). Its pathway is pyrimidine metabolism; CTP biosynthesis via de novo pathway; CTP from UDP: step 2/2. Its activity is regulated as follows. Allosterically activated by GTP, when glutamine is the substrate; GTP has no effect on the reaction when ammonia is the substrate. The allosteric effector GTP functions by stabilizing the protein conformation that binds the tetrahedral intermediate(s) formed during glutamine hydrolysis. Inhibited by the product CTP, via allosteric rather than competitive inhibition. Catalyzes the ATP-dependent amination of UTP to CTP with either L-glutamine or ammonia as the source of nitrogen. Regulates intracellular CTP levels through interactions with the four ribonucleotide triphosphates. This is CTP synthase from Jannaschia sp. (strain CCS1).